Here is a 443-residue protein sequence, read N- to C-terminus: UDP-N-acetylmuramate--L-alanine ligase (443 aa).

110 to 116 (GAHGKTS) provides a ligand contact to ATP.

This sequence belongs to the MurCDEF family.

The protein localises to the cytoplasm. It catalyses the reaction UDP-N-acetyl-alpha-D-muramate + L-alanine + ATP = UDP-N-acetyl-alpha-D-muramoyl-L-alanine + ADP + phosphate + H(+). It functions in the pathway cell wall biogenesis; peptidoglycan biosynthesis. Cell wall formation. The sequence is that of UDP-N-acetylmuramate--L-alanine ligase from Lactococcus lactis subsp. cremoris (strain SK11).